The following is a 91-amino-acid chain: Cell division protein FtsB (91 aa).

Residues 1-3 (MRW) are Cytoplasmic-facing. Residues 4 to 21 (PVIILAVLVVVLQYPLWL) traverse the membrane as a helical segment. Topologically, residues 22-91 (GKGGWLRVWE…EIFVQVPQKH (70 aa)) are periplasmic. A coiled-coil region spans residues 28 to 72 (RVWEVDRKLHEQREENTRLEERNAGLDAEVRDLKSGNEAIEERAR).

It belongs to the FtsB family. Part of a complex composed of FtsB, FtsL and FtsQ.

It is found in the cell inner membrane. In terms of biological role, essential cell division protein. May link together the upstream cell division proteins, which are predominantly cytoplasmic, with the downstream cell division proteins, which are predominantly periplasmic. The sequence is that of Cell division protein FtsB from Azoarcus sp. (strain BH72).